We begin with the raw amino-acid sequence, 218 residues long: NAD(P)H-quinone oxidoreductase subunit U, chloroplastic (218 aa).

A chloroplast-targeting transit peptide spans 1–53; sequence MASLSTITQPSLVHIPGESVLHHVPSTCSFPWKPTINTKRIICSPARNSSEVS. A disordered region spans residues 47–72; the sequence is RNSSEVSAEAETEGGSSTAVDEAPKE. The 65-residue stretch at 95–159 folds into the J domain; the sequence is DHYGRLGIFR…EERRMYDWSL (65 aa). A helical transmembrane segment spans residues 197–217; that stretch reads ILGYFIGAWLVLGVALSVAFN.

As to quaternary structure, part of the chloroplast NDH complex, composed of a mixture of chloroplast and nucleus encoded subunits. Component of the electron donor-binding subcomplex, at least composed of NDHS, NDHT and NDHU.

The protein localises to the plastid. The protein resides in the chloroplast thylakoid membrane. It catalyses the reaction a plastoquinone + NADH + (n+1) H(+)(in) = a plastoquinol + NAD(+) + n H(+)(out). The enzyme catalyses a plastoquinone + NADPH + (n+1) H(+)(in) = a plastoquinol + NADP(+) + n H(+)(out). Functionally, NDH shuttles electrons from NAD(P)H:plastoquinone, via FMN and iron-sulfur (Fe-S) centers, to quinones in the photosynthetic chain and possibly in a chloroplast respiratory chain. The immediate electron acceptor for the enzyme in this species is believed to be plastoquinone. Couples the redox reaction to proton translocation, and thus conserves the redox energy in a proton gradient. The chain is NAD(P)H-quinone oxidoreductase subunit U, chloroplastic from Arabidopsis thaliana (Mouse-ear cress).